The chain runs to 276 residues: Large ribosomal subunit protein uL2 (276 aa).

The interval 224–276 (AMNPIDHPHGGGEGKTSGGRNPVTPWGVSTKGKKTRKKNKSSNKYIKRVSDKG) is disordered. A compositionally biased stretch (basic residues) spans 254-270 (KGKKTRKKNKSSNKYIK).

This sequence belongs to the universal ribosomal protein uL2 family. Part of the 50S ribosomal subunit. Forms a bridge to the 30S subunit in the 70S ribosome.

Functionally, one of the primary rRNA binding proteins. Required for association of the 30S and 50S subunits to form the 70S ribosome, for tRNA binding and peptide bond formation. It has been suggested to have peptidyltransferase activity; this is somewhat controversial. Makes several contacts with the 16S rRNA in the 70S ribosome. This chain is Large ribosomal subunit protein uL2, found in Ehrlichia ruminantium (strain Gardel).